Consider the following 90-residue polypeptide: Cytochrome c7 (90 aa).

The N-terminal stretch at 1 to 20 (MKRIIASLALSVFCAGLAFA) is a signal peptide. Heme is bound by residues His37, His40, Cys47, Cys50, His51, His67, Cys70, Cys73, His74, Cys84, Cys87, and His88.

In terms of processing, binds 3 heme groups per subunit.

Functionally, may be involved in anaerobic iron respiration. The chain is Cytochrome c7 from Geobacter metallireducens (strain ATCC 53774 / DSM 7210 / GS-15).